Reading from the N-terminus, the 201-residue chain is ADP-ribosylation factor-related protein 1 (201 aa).

Met1 bears the N-acetylmethionine mark. GTP-binding positions include 24 to 31 (GLDNAGKT), 75 to 79 (DLGGQ), and 134 to 137 (NKQD).

Belongs to the small GTPase superfamily. Arf family. Interacts with SYS1.

Its subcellular location is the golgi apparatus. The protein resides in the trans-Golgi network. In terms of biological role, trans-Golgi-associated GTPase that regulates protein sorting. Controls the targeting of ARL1 and its effector to the trans-Golgi. Required for the lipidation of chylomicrons in the intestine and required for VLDL lipidation in the liver. This Mus musculus (Mouse) protein is ADP-ribosylation factor-related protein 1 (Arfrp1).